Here is a 559-residue protein sequence, read N- to C-terminus: MAKSMRTIKNPFFTSHPPSPFFHLSLLFFTPLKKSSPRYLNHHHQTRCPPPQFFLLLISLSLVFSGISFLTFSLDTGSSTCVSTSSASSLKFFISDVDHRQILTSLAVSGASTLFPLPARGGHSGNMTEEEKEFWKQPNGEGYKPCLDFSLEYKKKSASVSKEKKRFLVVVVSGGLNQQRNQIVDAVVIAMILEAALVVPVLQVNRVWGDESEFSDLFDVEHFKKTLRSDVRIVSSLPSTHLMSRQTIENQIPWDVSPVWIRAKYFKQLNEEGLLVLKGLDSKLAKNLPPDLQKLRCKVAFHALRFAAPIENLGNKLTRRMWIEGPYIALHLRLEKDVWVRTGCLTGLGSEFDRIIAETRTSQPRYLTGRLNLTYTERRLAGFCPLNVYEIARLLKALGAPSNASIYIAGGEPFGGSRALEPLAKEFSNLVTKETLAHKGELLPYTNRSSALAAIDYIVSLSSDVFIPSHGGNMAKAMQGNRAYVGHRKFIMPNKRAMLPLMENSSVSDAELSFLTRKLHRKSQGYPESRRGRRDRDVIAYPVPECMCRHRKHRSVGFF.

The helical; Signal-anchor for type II membrane protein transmembrane segment at 53-73 threads the bilayer; the sequence is FFLLLISLSLVFSGISFLTFS. N126 is a glycosylation site (N-linked (GlcNAc...) asparagine). 331–333 serves as a coordination point for substrate; that stretch reads HLR. N372, N403, N447, and N504 each carry an N-linked (GlcNAc...) asparagine glycan.

It belongs to the glycosyltransferase GT106 family.

It is found in the membrane. It functions in the pathway glycan metabolism. In Arabidopsis thaliana (Mouse-ear cress), this protein is O-fucosyltransferase 37.